The following is a 312-amino-acid chain: MPFEHVTVLLHEAIALLDIKPEGTYVDATLGGGGHTGEILKQLTTGTLYSFDQDDTAIQYNAEQYADEIAAGKLVIIHKNFRTLTSALADYGVTAVDGIVYDLGVSSVQFDDGQRGFSYKYDAELDMRMDQRQALTAKTIVNEWPFNELMRVLSRYGEDRFPKQIARKIEQHRENAPINTTFELVDIIKEAIPAPARRKGGHPAKRSFQAFRIAVNDELGALEDSLTQALELLATDGKISVITFQSLEDRLVKQMFREKSSAPELPAGLPVLPGQFEADYELLTRKPISPSTEEMAINHRAESAKLRGIRRK.

Residues 33–35 (GGH), Asp-52, Phe-81, Asp-102, and Gln-109 each bind S-adenosyl-L-methionine.

The protein belongs to the methyltransferase superfamily. RsmH family.

It is found in the cytoplasm. The enzyme catalyses cytidine(1402) in 16S rRNA + S-adenosyl-L-methionine = N(4)-methylcytidine(1402) in 16S rRNA + S-adenosyl-L-homocysteine + H(+). In terms of biological role, specifically methylates the N4 position of cytidine in position 1402 (C1402) of 16S rRNA. The polypeptide is Ribosomal RNA small subunit methyltransferase H (Leuconostoc mesenteroides subsp. mesenteroides (strain ATCC 8293 / DSM 20343 / BCRC 11652 / CCM 1803 / JCM 6124 / NCDO 523 / NBRC 100496 / NCIMB 8023 / NCTC 12954 / NRRL B-1118 / 37Y)).